A 189-amino-acid polypeptide reads, in one-letter code: Protein CotJC (189 aa).

It belongs to the manganese catalase family.

The cotJ operon proteins affect spore coat composition. They are either required for the normal formation of the inner layers of the coat or are themselves structural components of the coat. This is Protein CotJC (cotJC) from Bacillus subtilis (strain 168).